The following is a 213-amino-acid chain: mRNA-decapping protein D9 (213 aa).

Residues 30–209 form the Nudix hydrolase domain; it reads KDTHVFAACI…EYLSYIYNML (180 aa). Positions 111–132 match the Nudix box motif; that stretch reads GKLDKKESIKDCLRRELKEESD. Glu117 is a binding site for Mg(2+). The active-site Nucleophile is Glu126. Mg(2+) is bound by residues Glu130 and Asp151.

Belongs to the Nudix hydrolase family. Requires Mg(2+) as cofactor. Mn(2+) serves as cofactor.

Decapping enzyme required for the removal of the 5'-end m7GpppN cap tethered to viral and host mRNAs to allow their decay in cells. May therefore accelerate viral and cellular mRNA turnover to eliminate competing host mRNAs and allow stage-specific synthesis of viral proteins. Acceleration of the turnover of cellular transcripts may even promote the shutoff of host protein synthesis. Does not cleave unmethylated RNAs or RNAs shorter than 24 nucleotides. In Homo sapiens (Human), this protein is mRNA-decapping protein D9.